The following is a 118-amino-acid chain: Ribonuclease P protein component (118 aa).

This sequence belongs to the RnpA family. Consists of a catalytic RNA component (M1 or rnpB) and a protein subunit.

It carries out the reaction Endonucleolytic cleavage of RNA, removing 5'-extranucleotides from tRNA precursor.. Its function is as follows. RNaseP catalyzes the removal of the 5'-leader sequence from pre-tRNA to produce the mature 5'-terminus. It can also cleave other RNA substrates such as 4.5S RNA. The protein component plays an auxiliary but essential role in vivo by binding to the 5'-leader sequence and broadening the substrate specificity of the ribozyme. The chain is Ribonuclease P protein component from Rickettsia conorii (strain ATCC VR-613 / Malish 7).